We begin with the raw amino-acid sequence, 425 residues long: Serine--tRNA ligase 1 (425 aa).

L-serine is bound at residue 230–232 (TSE). ATP contacts are provided by residues 261–263 (RRE) and Val-277. Glu-284 is an L-serine binding site. 348–351 (ELTS) provides a ligand contact to ATP. Residue Thr-382 coordinates L-serine.

It belongs to the class-II aminoacyl-tRNA synthetase family. Type-1 seryl-tRNA synthetase subfamily. In terms of assembly, homodimer. The tRNA molecule binds across the dimer.

It localises to the cytoplasm. The catalysed reaction is tRNA(Ser) + L-serine + ATP = L-seryl-tRNA(Ser) + AMP + diphosphate + H(+). It catalyses the reaction tRNA(Sec) + L-serine + ATP = L-seryl-tRNA(Sec) + AMP + diphosphate + H(+). It functions in the pathway aminoacyl-tRNA biosynthesis; selenocysteinyl-tRNA(Sec) biosynthesis; L-seryl-tRNA(Sec) from L-serine and tRNA(Sec): step 1/1. In terms of biological role, catalyzes the attachment of serine to tRNA(Ser). Is also able to aminoacylate tRNA(Sec) with serine, to form the misacylated tRNA L-seryl-tRNA(Sec), which will be further converted into selenocysteinyl-tRNA(Sec). The polypeptide is Serine--tRNA ligase 1 (Streptomyces avermitilis (strain ATCC 31267 / DSM 46492 / JCM 5070 / NBRC 14893 / NCIMB 12804 / NRRL 8165 / MA-4680)).